The following is a 122-amino-acid chain: Large ribosomal subunit protein bL12 (122 aa).

It belongs to the bacterial ribosomal protein bL12 family. In terms of assembly, homodimer. Part of the ribosomal stalk of the 50S ribosomal subunit. Forms a multimeric L10(L12)X complex, where L10 forms an elongated spine to which 2 to 4 L12 dimers bind in a sequential fashion. Binds GTP-bound translation factors.

Functionally, forms part of the ribosomal stalk which helps the ribosome interact with GTP-bound translation factors. Is thus essential for accurate translation. In Xylella fastidiosa (strain M23), this protein is Large ribosomal subunit protein bL12.